The primary structure comprises 537 residues: Oocyte zinc finger protein XlCOF29 (537 aa).

Positions 1–21 (MGMSEKASDTGMKGKKKDKNE) are disordered. 6 consecutive C2H2-type zinc fingers follow at residues 375-397 (FTCS…LKSH), 403-425 (FSCS…RRLH), 431-453 (FPCA…SKTH), 459-481 (YSCT…KKRH), 487-509 (YTCS…VRIH), and 515-537 (FSCS…ERMH).

This sequence belongs to the krueppel C2H2-type zinc-finger protein family.

The protein localises to the nucleus. Functionally, may be involved in transcriptional regulation. This is Oocyte zinc finger protein XlCOF29 from Xenopus laevis (African clawed frog).